The sequence spans 168 residues: MLNNKNRNVGRLTVLCCLFAANTFADVQILGSESELSQTIADQYQQNVTLFNGQLNSNDVLYVNVGTATDDEITQAKSHIISGSTVVIDLTQIAGDDARLDWSQKLTGLGLSAPVVVTGVYQGDALVNAIVSDVTDENDNPINDPQAELESVKLSLTHALDRFQSEGK.

This chain is Cytolysin secretion protein (vvhB), found in Vibrio vulnificus (strain CMCP6).